A 337-amino-acid polypeptide reads, in one-letter code: Bifunctional methylenetetrahydrofolate dehydrogenase/cyclohydrolase, mitochondrial (337 aa).

A mitochondrion-targeting transit peptide spans 1–30; that stretch reads MATALCPLRALGQTAFRPRTRRLHLSAPRA. Substrate-binding positions include 79 to 83 and 126 to 128; these read YVLNK and VQL. Residues 195 to 197 and Arg-228 contribute to the NAD(+) site; that span reads GRS. Residue 304–308 coordinates substrate; sequence PGGVG.

It belongs to the tetrahydrofolate dehydrogenase/cyclohydrolase family. Requires Mg(2+) as cofactor.

The protein localises to the mitochondrion. The catalysed reaction is (6R)-5,10-methylene-5,6,7,8-tetrahydrofolate + NAD(+) = (6R)-5,10-methenyltetrahydrofolate + NADH. It catalyses the reaction (6R)-5,10-methenyltetrahydrofolate + H2O = (6R)-10-formyltetrahydrofolate + H(+). In terms of biological role, although its dehydrogenase activity is NAD-specific, it can also utilize NADP at a reduced efficiency. This Gallus gallus (Chicken) protein is Bifunctional methylenetetrahydrofolate dehydrogenase/cyclohydrolase, mitochondrial (MTHFD2).